The sequence spans 503 residues: MTLRDVEKLRLWRLKIFRNQQPILRAKPPHASRKTQYLFQKIDNVKSQFGTDGKGDLLWQRDGMNPYHDLYDPGDLKTHRLSVTKLLTKSWCELRFAYDLYSRLPLFREAHLAAGERTHQKLENSEHTPVIRPQDIPQFSETVEIVEDDLHVLAASWAETITRLIHLFSSGDAREILCHGYLNKETNQLYDPMETEVWDPSQHILISGIIDHLTLTSKNGNLPLNNHHRSIDDSIAKLKNTRNEFAKNGLTIQISDVKTRTRKFIPPQESVQNATKLQLMYYRHFLLSLGTDSDNTYEMLLYNARIRGVDVDQPLNPANCLLIMIQMDGFVGDFVKLQNGDGFQFPKFDNAPISHSFTLADAKHHQFLQNINSHELAGQLLNGTFAKPITLRYFAMRLAQMYSMLTPLISEKLKVEYYHNNECFQEVEFVNDKKSLGESCRSASSFWFGKRAIEPVEATTFNYNQYCKHCDYRDHCAWIKDSLAKSTKLGDELTQIARRIHNI.

4 residues coordinate [4Fe-4S] cluster: C92, C467, C470, and C476.

The protein belongs to the EXO5 family. Monomer. Mg(2+) serves as cofactor. Requires [4Fe-4S] cluster as cofactor.

The protein localises to the mitochondrion. In terms of biological role, single strand DNA specific 5' exonuclease involved in mitochondrial DNA replication and recombination. Releases dinucleotides as main products of catalysis. Has the capacity to slide across 5'double-stranded DNA or 5'RNA sequences and resumes cutting two nucleotides downstream of the double-stranded-to-single-stranded junction or RNA-to-DNA junction, respectively. The protein is Exonuclease V, mitochondrial (EXO5) of Candida glabrata (strain ATCC 2001 / BCRC 20586 / JCM 3761 / NBRC 0622 / NRRL Y-65 / CBS 138) (Yeast).